A 1465-amino-acid polypeptide reads, in one-letter code: Vacuolar heme ABC transmembrane exporter abc3 (1465 aa).

The Extracellular segment spans residues 1-8; sequence MITANKGL. Residues 9–29 form a helical membrane-spanning segment; it reads SLVLLIPNLFALVSGGLQYVF. At 30–42 the chain is on the cytoplasmic side; it reads DVRRRIFRPHFSQ. A helical transmembrane segment spans residues 43–63; sequence FWTIWMKFFSIALVIITQIYV. Over 64-69 the chain is Extracellular; it reads GYKTKN. The chain crosses the membrane as a helical span at residues 70-90; the sequence is IGWNFFSVVTYCFVLFLQFAE. The Cytoplasmic portion of the chain corresponds to 91–97; it reads QSTLRVP. A helical membrane pass occupies residues 98-118; sequence MASLLIFWLLKVVTSLLILLF. The Extracellular portion of the chain corresponds to 119 to 129; sequence SPYIAITSMAR. A helical transmembrane segment spans residues 130–150; it reads LLTLITLFCSLVCFISEVYVP. 151 to 152 contributes to the heme binding site; the sequence is PC. The Cytoplasmic segment spans residues 151 to 235; sequence PCNRVWYSDD…IYHSKNKRRS (85 aa). Residues 236-256 traverse the membrane as a helical segment; sequence LFLWKLLFFNHWKLVALITIT. An ABC transmembrane type-1 1 domain is found at 250 to 539; it reads VALITITKLI…LPTVISSLLE (290 aa). The Extracellular segment spans residues 257–291; that stretch reads KLIQDVLAFVQPTLIQKTILFISSYTSPNPESPSR. Residues 292–312 traverse the membrane as a helical segment; it reads GFIIAILVLVANFLQTLLLQQ. The Cytoplasmic portion of the chain corresponds to 313-362; sequence YNQLIMLLGMRWKTELLASIYRKSLLLSSSARQNRSIGDIINYMAVDTQK. Residues 363 to 383 form a helical membrane-spanning segment; the sequence is ISDLPIYLFIIVSGPFQIALA. Over 384–394 the chain is Extracellular; the sequence is LSNLYHLMGYS. A helical membrane pass occupies residues 395 to 415; that stretch reads AFTGVAASVILFPCNIIVANV. The Cytoplasmic segment spans residues 416–480; that stretch reads YKKFQSILMK…KIGFITAIGD (65 aa). The chain crosses the membrane as a helical span at residues 481–501; it reads FAWIFTTIIVTTVAFGAFIIF. Residues 502 to 511 lie on the Extracellular side of the membrane; that stretch reads HGKTQALTAD. The helical transmembrane segment at 512–532 threads the bilayer; sequence IVFPAVSLFNLLQFPLAMLPT. The Cytoplasmic segment spans residues 533 to 899; it reads VISSLLEASV…VYWMYFKSCS (367 aa). One can recognise an ABC transporter 1 domain in the interval 575–804; the sequence is LEIKSGTFSW…TNSELKQQLS (230 aa). 614–621 lines the ATP pocket; it reads GKVGAGKS. Disordered stretches follow at residues 805–824 and 840–869; these read EFND…SYPS and TYSS…TEDD. Residues 900–920 form a helical membrane-spanning segment; it reads IGLILLYFFFIISGIMMNVAT. Residues 903-1189 form the ABC transmembrane type-1 2 domain; sequence ILLYFFFIIS…IVQQSVDAEN (287 aa). At 921 to 939 the chain is on the extracellular side; that stretch reads NVWLKHWSEENGKSSSELN. The helical transmembrane segment at 940 to 960 threads the bilayer; the sequence is PSPYFYLGIYLFFGFLSCAFI. Residues 961–1033 are Cytoplasmic-facing; that stretch reads SSSSLTMTVL…FFFRNSIQVL (73 aa). The chain crosses the membrane as a helical span at residues 1034-1054; it reads FILGVICYSAPLSLLLIVPLF. At 1055-1465 the chain is on the extracellular side; it reads FLYLYNRAYY…YSLAKESGLI (411 aa). The ABC transporter 2 domain occupies 1226 to 1460; it reads VSFNHYSAKY…KDSMFYSLAK (235 aa). 1260–1267 provides a ligand contact to ATP; the sequence is GRTGAGKS.

The protein belongs to the ABC transporter superfamily.

It localises to the vacuole membrane. Its function is as follows. Iron-regulated vacuolar transporter that mobilizes stored heme from the vacuole to the cytosol in response to iron deficiency. The chain is Vacuolar heme ABC transmembrane exporter abc3 from Schizosaccharomyces pombe (strain 972 / ATCC 24843) (Fission yeast).